Here is a 222-residue protein sequence, read N- to C-terminus: Protein ORM1 (222 aa).

Residues 1–57 (MTELDYQGTAEAASTSYSRNQTDLKPFPSAGSASSSIKTTEPVKDHRRRRSSSIISH) are disordered. Residues 1–85 (MTELDYQGTA…NATWVDQRGA (85 aa)) are Cytoplasmic-facing. The segment covering 12–23 (AASTSYSRNQTD) has biased composition (polar residues). Ser-29, Ser-32, and Ser-56 each carry phosphoserine. A helical membrane pass occupies residues 86-106 (WIIHVVIIILLKLFYNLFPGV). Residues 107-109 (TTE) are Extracellular-facing. Residues 110 to 130 (WSWTLTNMTYVIGSYVMFHLI) traverse the membrane as a helical segment. The Cytoplasmic segment spans residues 131–162 (KGTPFDFNGGAYDNLTMWEQIDDETLYTPSRK). A helical transmembrane segment spans residues 163–183 (FLISVPIALFLVSTHYAHYDL). Lys-184 is a topological domain (extracellular). Residues 185-205 (LFSWNCFLTTFGAVVPKLPVT) traverse the membrane as a helical segment. Residues 206–222 (HRLRISIPGITGRAQIS) are Cytoplasmic-facing.

This sequence belongs to the ORM family. Component of the SPOTS complex, at least composed of LCB1/2 (LCB1 and/or LCB2), ORM1/2 (ORM1 and/or ORM2), SAC1 and TSC3. Phosphorylated in case of disruption of sphingolipid synthesis. Phosphorylation regulates inhibitory activity of serine palmitoyltransferases (LCB1 and LCB2).

It is found in the endoplasmic reticulum membrane. Its function is as follows. Component of the SPOTS complex that acts as a negative regulator of sphingolipid synthesis. Acts by inhibiting serine palmitoyltransferases (LCB1 and LCB2) activity. Along with ORM2, plays a role in the phosphorylation of LAC1 and YPK1, the distribution of actin patches between mother and daughter cells, and in endocytosis. Disruption or inhibition of sphingolipid synthesis leads to the activation and phosphorylation of YPK1 through the TORC2 and PKH1 pathways, which in turn phosphorylates ORM1 and LAG1 to activate sphingolipid synthesis. The protein is Protein ORM1 (ORM1) of Saccharomyces cerevisiae (strain ATCC 204508 / S288c) (Baker's yeast).